Reading from the N-terminus, the 436-residue chain is GTPase Der (436 aa).

2 consecutive EngA-type G domains span residues 4-167 and 175-351; these read PTVA…PNEI and IKFS…HAQN. Residues 10-17, 57-61, 119-122, 181-188, 229-233, and 294-297 each bind GTP; these read GRPNVGKS, DTGGI, NKVD, DTAGM, and NKWD. One can recognise a KH-like domain in the interval 352 to 436; it reads LRISSSVLND…PIHLIARKRK (85 aa).

Belongs to the TRAFAC class TrmE-Era-EngA-EngB-Septin-like GTPase superfamily. EngA (Der) GTPase family. In terms of assembly, associates with the 50S ribosomal subunit.

In terms of biological role, GTPase that plays an essential role in the late steps of ribosome biogenesis. In Lactococcus lactis subsp. cremoris (strain SK11), this protein is GTPase Der.